The following is a 176-amino-acid chain: Pectinesterase inhibitor 1 (176 aa).

Residues 1 to 25 form the signal peptide; sequence MAANLRNNAFLSSLMFLLLIGSSYA. Cystine bridges form between C35/C44 and C98/C138. N-linked (GlcNAc...) asparagine glycosylation is present at N154.

This sequence belongs to the PMEI family. Monomer and homodimer. Interacts in vitro with PPME1. As to expression, highest expression in flowers. Expressed exclusively at the pollen tube tip.

The protein localises to the secreted. It localises to the extracellular space. The protein resides in the apoplast. Its function is as follows. Inhibits pectin methylesterase (PME) from flowers and siliques. Inhibits PME from leaves. The polypeptide is Pectinesterase inhibitor 1 (Arabidopsis thaliana (Mouse-ear cress)).